The following is a 462-amino-acid chain: Prenyltransferase phqI (462 aa).

A brevianamide F-binding site is contributed by Glu-101. Dimethylallyl diphosphate is bound by residues Arg-117, Lys-204, Tyr-206, Lys-273, Tyr-275, Tyr-357, Tyr-442, and Tyr-446.

This sequence belongs to the tryptophan dimethylallyltransferase family.

It participates in alkaloid biosynthesis. Prenyltransferase; part of the gene cluster that mediates the biosynthesis of paraherquamide, a fungal indole alkaloid that belongs to a family of natural products containing a characteristic bicyclo[2.2.2]diazaoctane core. The first steps in the biosynthesis of paraherquamide is the production of the beta-methyl-proline precursor from L-isoleucine. They require oxidation of a terminally hydroxylated L-isoleucine to the corresponding aldehyde by enzymes which have still to be identified. Spontaneous cyclization and dehydration would yield the 4-methyl pyrolline-5-carboxylic acid, which is then reduced by the pyrroline-5-carboxylate reductase phqD leading to the beta-methyl-proline precursor. The next step of paraherquamide biosynthesis involves coupling of beta-methyl-proline and L-tryptophan by the bimodular NRPS phqB, to produce a monooxopiperazine intermediate. The reductase (R) domain of phqB utilizes NADPH for hydride transfer to reduce the thioester bond of the T domain-tethered linear dipeptide to a hemithioaminal intermediate, which spontaneously cleaves the C-S bond to release the aldehyde product. This compound undergoes spontaneous cyclization and dehydration to give a dienamine which is reverse prenylated at C-2 by the reverse prenyltransferase phqJ. The other prenyltransferase present in the cluster, phqI may be a redundant gene in the pathway. During biosynthetic assembly, the key step to produce the polycyclic core is catalyzed by the bifunctional reductase and intramolecular [4+2] Diels-Alderase, phqE, resulting in formation of the [2.2.2] diazaoctane intermediate preparaherquamide. Following formation of preparaherquamide, an indole 2,3-epoxidation-initiated pinacol-like rearrangement is catalyzed by the phqK FAD-dependent monooxygenase. The prenyltransferase phqA, the cytochrome P450 monooxygenase phqL, and the FAD-linked oxidoreductase phqH (or the cytochrome P450 monooxygenase phqM), are proposed to be involved in the formation of the pyran ring. The FAD-dependent monooxygenase phqK is likely responsible for generation of the spiro-oxindole, and the N-methylation is likely mediated by the phqN methyltransferase leading to the isolable natural product paraherquamide F. However, the order of these biosynthetic steps has still to be determined. In late-stage paraherquamide biosynthesis, the third P450 monooxygenase, phqO, is probably responsible for the C-14 hydroxylation, transforming paraherquamide F to paraherquamide G, and paraherquamide E to the final product paraherquamide A. The expansion from the 6-membered ring pyran (in paraherquamides F and G) to the 7-membered dioxepin ring (in paraherquamides A and E) represents a poorly understood but intriguing process that probably involves the 2-oxoglutarate-dependent dioxygenase phqC. Finally, the remaining members of the paraherquamide cluster, including phqI as well as phqM (or phqH), do not have a clearly prescribed role and appear to be redundant. The chain is Prenyltransferase phqI from Penicillium fellutanum.